Consider the following 45-residue polypeptide: Large ribosomal subunit protein bL34c (45 aa).

Positions 1 to 21 (MIQRTLTGTNRKKTKRSGFRS) are disordered. The span at 10-19 (NRKKTKRSGF) shows a compositional bias: basic residues.

It belongs to the bacterial ribosomal protein bL34 family.

The protein resides in the plastid. The protein localises to the chloroplast. This chain is Large ribosomal subunit protein bL34c (rpl34), found in Cyanidium caldarium (Red alga).